A 165-amino-acid chain; its full sequence is CDP-archaeol synthase (165 aa).

The next 3 helical transmembrane spans lie at 4–24 (IVQL…AVLA), 78–98 (LLDA…GAFV), and 118–138 (FLLM…PLLL).

Belongs to the CDP-archaeol synthase family. The cofactor is Mg(2+).

It is found in the cell membrane. The enzyme catalyses 2,3-bis-O-(geranylgeranyl)-sn-glycerol 1-phosphate + CTP + H(+) = CDP-2,3-bis-O-(geranylgeranyl)-sn-glycerol + diphosphate. It functions in the pathway membrane lipid metabolism; glycerophospholipid metabolism. Its function is as follows. Catalyzes the formation of CDP-2,3-bis-(O-geranylgeranyl)-sn-glycerol (CDP-archaeol) from 2,3-bis-(O-geranylgeranyl)-sn-glycerol 1-phosphate (DGGGP) and CTP. This reaction is the third ether-bond-formation step in the biosynthesis of archaeal membrane lipids. The chain is CDP-archaeol synthase from Pyrobaculum calidifontis (strain DSM 21063 / JCM 11548 / VA1).